Reading from the N-terminus, the 582-residue chain is Aspartate--tRNA ligase (582 aa).

Residues 198-201 (QIFK) form an aspartate region. Residue Arg-220 participates in L-aspartate binding. ATP-binding positions include 220–222 (RDE) and Gln-229. His-445 serves as a coordination point for L-aspartate. Glu-479 provides a ligand contact to ATP. Arg-486 lines the L-aspartate pocket. 531 to 534 (GFDR) contributes to the ATP binding site.

It belongs to the class-II aminoacyl-tRNA synthetase family. Type 1 subfamily. Homodimer.

The protein resides in the cytoplasm. The enzyme catalyses tRNA(Asp) + L-aspartate + ATP = L-aspartyl-tRNA(Asp) + AMP + diphosphate. Functionally, catalyzes the attachment of L-aspartate to tRNA(Asp) in a two-step reaction: L-aspartate is first activated by ATP to form Asp-AMP and then transferred to the acceptor end of tRNA(Asp). This chain is Aspartate--tRNA ligase, found in Amoebophilus asiaticus (strain 5a2).